The following is a 483-amino-acid chain: Glutamyl-tRNA(Gln) amidotransferase subunit A (483 aa).

Active-site charge relay system residues include lysine 76 and serine 151. Residue serine 175 is the Acyl-ester intermediate of the active site.

It belongs to the amidase family. GatA subfamily. In terms of assembly, heterotrimer of A, B and C subunits.

The enzyme catalyses L-glutamyl-tRNA(Gln) + L-glutamine + ATP + H2O = L-glutaminyl-tRNA(Gln) + L-glutamate + ADP + phosphate + H(+). In terms of biological role, allows the formation of correctly charged Gln-tRNA(Gln) through the transamidation of misacylated Glu-tRNA(Gln) in organisms which lack glutaminyl-tRNA synthetase. The reaction takes place in the presence of glutamine and ATP through an activated gamma-phospho-Glu-tRNA(Gln). The sequence is that of Glutamyl-tRNA(Gln) amidotransferase subunit A from Pseudomonas putida (strain W619).